The chain runs to 239 residues: Ribosomal RNA small subunit methyltransferase G (239 aa).

Residues G95, L100, 118–120 (EAT), 146–147 (AE), and R164 each bind S-adenosyl-L-methionine.

It belongs to the methyltransferase superfamily. RNA methyltransferase RsmG family.

The protein resides in the cytoplasm. The enzyme catalyses guanosine(527) in 16S rRNA + S-adenosyl-L-methionine = N(7)-methylguanosine(527) in 16S rRNA + S-adenosyl-L-homocysteine. In terms of biological role, specifically methylates the N7 position of guanine in position 527 of 16S rRNA. This chain is Ribosomal RNA small subunit methyltransferase G, found in Sorangium cellulosum (strain So ce56) (Polyangium cellulosum (strain So ce56)).